Consider the following 363-residue polypeptide: Histidinol-phosphate aminotransferase (363 aa).

Lysine 226 bears the N6-(pyridoxal phosphate)lysine mark.

Belongs to the class-II pyridoxal-phosphate-dependent aminotransferase family. Histidinol-phosphate aminotransferase subfamily. Homodimer. It depends on pyridoxal 5'-phosphate as a cofactor.

The catalysed reaction is L-histidinol phosphate + 2-oxoglutarate = 3-(imidazol-4-yl)-2-oxopropyl phosphate + L-glutamate. Its pathway is amino-acid biosynthesis; L-histidine biosynthesis; L-histidine from 5-phospho-alpha-D-ribose 1-diphosphate: step 7/9. The chain is Histidinol-phosphate aminotransferase from Campylobacter lari (strain RM2100 / D67 / ATCC BAA-1060).